Consider the following 143-residue polypeptide: Hemoglobin subunit alpha (143 aa).

Residues Arg2–Arg143 enclose the Globin domain. Position 60 (His60) interacts with O2. Position 89 (His89) interacts with heme b.

It belongs to the globin family. In terms of assembly, heterotetramer of two alpha chains and two beta chains. As to expression, red blood cells.

Involved in oxygen transport from the lung to the various peripheral tissues. The sequence is that of Hemoglobin subunit alpha (HBA) from Lepidosiren paradoxus (South American lungfish).